The chain runs to 345 residues: Large ribosomal subunit protein uL4 (345 aa).

Alanine 2 is subject to N-acetylalanine.

Belongs to the universal ribosomal protein uL4 family.

This chain is Large ribosomal subunit protein uL4 (rpl-4), found in Caenorhabditis elegans.